Consider the following 108-residue polypeptide: ATP synthase epsilon chain (108 aa).

It belongs to the ATPase epsilon chain family. As to quaternary structure, F-type ATPases have 2 components, CF(1) - the catalytic core - and CF(0) - the membrane proton channel. CF(1) has five subunits: alpha(3), beta(3), gamma(1), delta(1), epsilon(1). CF(0) has three main subunits: a, b and c.

Its subcellular location is the cell inner membrane. Its function is as follows. Produces ATP from ADP in the presence of a proton gradient across the membrane. This Thermotoga maritima (strain ATCC 43589 / DSM 3109 / JCM 10099 / NBRC 100826 / MSB8) protein is ATP synthase epsilon chain.